A 915-amino-acid chain; its full sequence is Coiled-coil domain-containing protein 57 (915 aa).

Residues 1–502 (MLPLGSEPAL…MHGLPRPGAQ (502 aa)) form a centrosomal targeting domain region. Coiled coils occupy residues 92–173 (VSEL…QRQE), 214–422 (LEAL…LERD), 456–483 (KSQVAAKLQETEQALQEQEVVLKAVTLE), and 521–548 (IQRLREQNTSLRNAIAQMRKEMEALSHQ). 3 disordered regions span residues 555 to 574 (TAAESTDANQPDPEAGGDAA), 606 to 653 (PLKM…QAGP), and 724 to 915 (QHGG…NIMD). A microtubule binding domain region spans residues 606-915 (PLKMSSPHAE…PKIRNYNIMD (310 aa)). The segment covering 613 to 627 (HAESQPSVRTSTETT) has biased composition (polar residues). Residues 628–652 (GGSAQAGQAGGSVQAGQAGGSVQAG) show a composition bias toward low complexity. Positions 745–758 (GREDAKSAEDEAPS) are enriched in basic and acidic residues. Polar residues-rich tracts occupy residues 781–794 (PKTQHSIHTVTCKS), 819–830 (SHSSSSFASGTL), and 841–852 (SSPSGVTSQGDS). Over residues 879–891 (KTAAQAKAKTTGA) the composition is skewed to low complexity.

Interacts with CEP63; the interaction is required for their location to proximal end of centrioles. Interacts with microtubules.

The protein resides in the cytoplasm. The protein localises to the cytoskeleton. It localises to the microtubule organizing center. Its subcellular location is the centrosome. It is found in the centriolar satellite. The protein resides in the centriole. The protein localises to the spindle. Functionally, pleiotropic regulator of centriole duplication, mitosis, and ciliogenesis. Critical interface between centrosome and microtubule-mediated cellular processes. Centriole duplication protein required for recruitment of CEP63, CEP152, and PLK4 to the centrosome. Independent of its centrosomal targeting, localizes to and interacts with microtubules and regulates microtubule nucleation, stability, and mitotic progression. In Homo sapiens (Human), this protein is Coiled-coil domain-containing protein 57.